Reading from the N-terminus, the 840-residue chain is Heat shock 70 kDa protein 4 (840 aa).

The residue at position 53 (K53) is an N6-acetyllysine. Phosphoserine is present on S76. A phosphotyrosine mark is found at Y89 and Y336. 2 positions are modified to phosphoserine: S393 and S415. At K430 the chain carries N6-acetyllysine. The segment at 500 to 575 (VHKSEESEEP…QAKKAKVKTS (76 aa)) is disordered. Residues 514 to 533 (QNAKEEEKMQVDQEEPHTEE) show a composition bias toward basic and acidic residues. Phosphothreonine is present on T538. Position 546 is a phosphoserine (S546). Residue Y660 is modified to Phosphotyrosine. Residue S756 is modified to Phosphoserine. K773 carries the N6-methyllysine modification. The interval 781-840 (PIISKPKPKVEPPKEEPKHAEQNGPVDGQGDNPGTQAAEHGADTAVPSDGDKKLPEMDID) is disordered. Basic and acidic residues-rich tracts occupy residues 788–801 (PKVE…KHAE) and 829–840 (DGDKKLPEMDID).

It belongs to the heat shock protein 70 family. As to quaternary structure, interacts with TJP1/ZO-1. As to expression, ubiquitous. Highly expressed in testis.

The protein resides in the cytoplasm. The sequence is that of Heat shock 70 kDa protein 4 (Hspa4) from Rattus norvegicus (Rat).